A 190-amino-acid chain; its full sequence is Probable molybdenum cofactor guanylyltransferase (190 aa).

Residues 9–11 (LCG), lysine 21, aspartate 65, and aspartate 94 contribute to the GTP site. Aspartate 94 contributes to the Mg(2+) binding site.

Belongs to the MobA family. Requires Mg(2+) as cofactor.

Its subcellular location is the cytoplasm. The enzyme catalyses Mo-molybdopterin + GTP + H(+) = Mo-molybdopterin guanine dinucleotide + diphosphate. Transfers a GMP moiety from GTP to Mo-molybdopterin (Mo-MPT) cofactor (Moco or molybdenum cofactor) to form Mo-molybdopterin guanine dinucleotide (Mo-MGD) cofactor. The chain is Probable molybdenum cofactor guanylyltransferase from Flavobacterium johnsoniae (strain ATCC 17061 / DSM 2064 / JCM 8514 / BCRC 14874 / CCUG 350202 / NBRC 14942 / NCIMB 11054 / UW101) (Cytophaga johnsonae).